A 407-amino-acid polypeptide reads, in one-letter code: uncharacterized protein (407 aa).

A coiled-coil region spans residues 10 to 37; it reads DKLEQLANDVVTELTDMENKYKDLHVEL.

This is an uncharacterized protein from Bacillus subtilis (strain 168).